Reading from the N-terminus, the 200-residue chain is Protein GrpE (200 aa).

Basic and acidic residues predominate over residues 1–27; the sequence is MTKQEKAENQEKPTEETVEETPKKETP. The interval 1-50 is disordered; the sequence is MTKQEKAENQEKPTEETVEETPKKETPFEPVMEADEVEETTEAQAPVEEA. Positions 32–41 are enriched in acidic residues; sequence MEADEVEETT.

Belongs to the GrpE family. As to quaternary structure, homodimer.

It is found in the cytoplasm. Its function is as follows. Participates actively in the response to hyperosmotic and heat shock by preventing the aggregation of stress-denatured proteins, in association with DnaK and GrpE. It is the nucleotide exchange factor for DnaK and may function as a thermosensor. Unfolded proteins bind initially to DnaJ; upon interaction with the DnaJ-bound protein, DnaK hydrolyzes its bound ATP, resulting in the formation of a stable complex. GrpE releases ADP from DnaK; ATP binding to DnaK triggers the release of the substrate protein, thus completing the reaction cycle. Several rounds of ATP-dependent interactions between DnaJ, DnaK and GrpE are required for fully efficient folding. This chain is Protein GrpE, found in Latilactobacillus sakei subsp. sakei (strain 23K) (Lactobacillus sakei subsp. sakei).